The primary structure comprises 840 residues: Homeobox-leucine zipper protein HOX9 (840 aa).

Disordered regions lie at residues Met-1–Asp-26 and Asn-135–Asn-160. Residues Gly-12–Asp-21 are compositionally biased toward gly residues. The homeobox DNA-binding region spans Asp-26–Lys-89. Residues Lys-86–Asn-135 are a coiled coil. Residues Asp-157–Val-385 enclose the START domain.

This sequence belongs to the HD-ZIP homeobox family. Class III subfamily. In terms of tissue distribution, expressed in seedlings, roots, stems, leaf sheaths and blades and panicles.

Its subcellular location is the nucleus. In terms of biological role, probable transcription factor. This Oryza sativa subsp. indica (Rice) protein is Homeobox-leucine zipper protein HOX9 (HOX9).